A 434-amino-acid chain; its full sequence is Enolase (434 aa).

Substrate-binding residues include H158 and E167. E210 functions as the Proton donor in the catalytic mechanism. Mg(2+) is bound by residues D245, E294, and D319. E294 and D319 together coordinate substrate. Catalysis depends on K344, which acts as the Proton acceptor. Substrate is bound by residues 371–374 (SHRS) and K395.

Belongs to the enolase family. As to quaternary structure, homodimer. It depends on Mg(2+) as a cofactor.

The protein localises to the cytoplasm. The enzyme catalyses (2R)-2-phosphoglycerate = phosphoenolpyruvate + H2O. It functions in the pathway carbohydrate degradation; glycolysis; pyruvate from D-glyceraldehyde 3-phosphate: step 4/5. This Schistosoma mansoni (Blood fluke) protein is Enolase (ENO).